The following is a 164-amino-acid chain: CASP-like protein 1C1 (164 aa).

Topologically, residues 1–7 (MVKLTKR) are cytoplasmic. The chain crosses the membrane as a helical span at residues 8 to 28 (IGGLVLRLAAFGAALAALIVM). Residues 29 to 51 (ITSRERASFLAISLEAKYTDMAA) lie on the Extracellular side of the membrane. A helical transmembrane segment spans residues 52–72 (FKYFVIANAVVSVYSFLVLFL). Residues 73–80 (PKESLLWK) are Cytoplasmic-facing. The chain crosses the membrane as a helical span at residues 81–101 (FVVVLDLVMTMLLTSSLSAAL). Residues 102–129 (AVAQVGKKGNANAGWLPICGQVPKFCDQ) are Extracellular-facing. Residues 130–150 (ITGALIAGFVALVLYVLLLLY) traverse the membrane as a helical segment. Topologically, residues 151 to 164 (SLHAVVDPFLLQKS) are cytoplasmic.

It belongs to the Casparian strip membrane proteins (CASP) family. In terms of assembly, homodimer and heterodimers. As to expression, expressed in the stele of the root.

The protein localises to the cell membrane. The sequence is that of CASP-like protein 1C1 from Arabidopsis thaliana (Mouse-ear cress).